A 142-amino-acid polypeptide reads, in one-letter code: Large ribosomal subunit protein mL42 (142 aa).

Residues 1–31 (MAAAVKWAISNRTIWKHLLPIQNGALSSACH) constitute a mitochondrion transit peptide.

The protein belongs to the mitochondrion-specific ribosomal protein mL42 family. Component of the mitochondrial ribosome large subunit (39S) which comprises a 16S rRNA and about 50 distinct proteins. Component of the mitochondrial ribosome small subunit (28S) which comprises a 12S rRNA and about 30 distinct proteins.

It is found in the mitochondrion. The sequence is that of Large ribosomal subunit protein mL42 (Mrpl42) from Mus musculus (Mouse).